Reading from the N-terminus, the 602-residue chain is DEAD-box ATP-dependent RNA helicase 52A (602 aa).

Positions 9 to 31 (KSVEAGGEPGGGGGGAWSTVSRS) are disordered. The span at 15–24 (GEPGGGGGGA) shows a compositional bias: gly residues. The Q motif motif lies at 84–112 (DGFEAAGLVEAVLRNVARCGYESPTPVQR). A Helicase ATP-binding domain is found at 115 to 305 (MPIALAGRDL…SDFLSNYIFI (191 aa)). 128 to 135 (AQTGSGKT) contacts ATP. The short motif at 249-252 (DEAD) is the DEAD box element. Residues 328 to 485 (EKRGYLLDLL…DVPDWLVQYA (158 aa)) form the Helicase C-terminal domain. Disordered stretches follow at residues 492 to 521 (GSSY…SGGG) and 552 to 602 (RGGG…SGWD). Residues 552 to 574 (RGGGYSRGGRGGYSGGGGGGGGD) show a composition bias toward gly residues.

Belongs to the DEAD box helicase family. DDX3/DED1 subfamily.

The catalysed reaction is ATP + H2O = ADP + phosphate + H(+). The chain is DEAD-box ATP-dependent RNA helicase 52A from Oryza sativa subsp. japonica (Rice).